Reading from the N-terminus, the 109-residue chain is Ferredoxin (109 aa).

4Fe-4S ferredoxin-type domains follow at residues 2-30 (TYVVNDECVKCKYTDCVDVCPVDCFYEGE) and 31-60 (FMLVINPDECIDCGVCVPDCPIDAIKPESP). Residues Cys-9 and Cys-17 each contribute to the [3Fe-4S] cluster site. Residues Cys-21, Cys-40, Cys-43, and Cys-46 each contribute to the [4Fe-4S] cluster site. Cys-50 lines the [3Fe-4S] cluster pocket.

[4Fe-4S] cluster serves as cofactor. The cofactor is [3Fe-4S] cluster.

In terms of biological role, ferredoxins are iron-sulfur proteins that transfer electrons in a wide variety of metabolic reactions. This is Ferredoxin (fdxA) from Rickettsia felis (strain ATCC VR-1525 / URRWXCal2) (Rickettsia azadi).